A 259-amino-acid polypeptide reads, in one-letter code: (3R)-3-hydroxyacyl-CoA dehydrogenase (259 aa).

NAD(+)-binding positions include 13–21 (LVTGAGSGI) and 40–41 (DL). Position 58 is a phosphoserine (Ser58). Position 66 is an N6-acetyllysine (Lys66). 72–74 (ADV) is a binding site for NAD(+). Ser154 serves as a coordination point for substrate. Position 158 is an N6-succinyllysine (Lys158). Residue Tyr167 is the Proton acceptor of the active site. NAD(+)-binding positions include 167 to 171 (YASSK) and 200 to 202 (IAT). Lys171 carries the N6-succinyllysine modification.

This sequence belongs to the short-chain dehydrogenases/reductases (SDR) family. As to quaternary structure, heterotetramer with CBR4; contains two molecules of HSD17B8 and CBR4. Expressed in ovary at protein level.

It localises to the mitochondrion matrix. It carries out the reaction a (3R)-3-hydroxyacyl-CoA + NAD(+) = a 3-oxoacyl-CoA + NADH + H(+). The enzyme catalyses 17beta-estradiol + NAD(+) = estrone + NADH + H(+). The catalysed reaction is testosterone + NAD(+) = androst-4-ene-3,17-dione + NADH + H(+). It catalyses the reaction 17beta-hydroxy-5alpha-androstan-3-one + NAD(+) = 5alpha-androstan-3,17-dione + NADH + H(+). It participates in steroid biosynthesis; estrogen biosynthesis. The protein operates within lipid metabolism; fatty acid biosynthesis. It functions in the pathway lipid metabolism; mitochondrial fatty acid beta-oxidation. In terms of biological role, required for the solubility and assembly of the heterotetramer 3-ketoacyl-[acyl carrier protein] (ACP) reductase functional complex (KAR or KAR1) that forms part of the mitochondrial fatty acid synthase (mtFAS). Alpha-subunit of the KAR complex that acts as scaffold protein required for the stability of carbonyl reductase type-4 (CBR4, beta-subunit of the KAR complex) and for its 3-ketoacyl-ACP reductase activity, thereby participating in mitochondrial fatty acid biosynthesis. Catalyzes the NAD-dependent conversion of (3R)-3-hydroxyacyl-CoA into 3-ketoacyl-CoA (3-oxoacyl-CoA) with no chain length preference; this enzymatic activity is not needed for the KAR function. Prefers (3R)-3-hydroxyacyl-CoA over (3S)-3-hydroxyacyl-CoA and displays enzymatic activity only in the presence of NAD(+). Cooperates with enoyl-CoA hydratase 1 in mitochondria, together they constitute an alternative route to the auxiliary enzyme pathways for the breakdown of Z-PUFA (cis polyunsaturated fatty acid) enoyl-esters. NAD-dependent 17-beta-hydroxysteroid dehydrogenase with highest activity towards estradiol (17beta-estradiol or E2). Has very low activity towards testosterone and dihydrotestosterone (17beta-hydroxy-5alpha-androstan-3-one). Primarily an oxidative enzyme, it can switch to a reductive mode determined in the appropriate physiologic milieu and catalyze the reduction of estrone (E1) to form biologically active 17beta-estradiol. The protein is (3R)-3-hydroxyacyl-CoA dehydrogenase (Hsd17b8) of Rattus norvegicus (Rat).